The chain runs to 141 residues: Putative pre-16S rRNA nuclease (141 aa).

The protein belongs to the YqgF nuclease family.

It localises to the cytoplasm. Its function is as follows. Could be a nuclease involved in processing of the 5'-end of pre-16S rRNA. The sequence is that of Putative pre-16S rRNA nuclease from Cupriavidus taiwanensis (strain DSM 17343 / BCRC 17206 / CCUG 44338 / CIP 107171 / LMG 19424 / R1) (Ralstonia taiwanensis (strain LMG 19424)).